The sequence spans 124 residues: Small ribosomal subunit protein uS12 (124 aa).

Asp89 is modified (3-methylthioaspartic acid). Residues 105-124 (QGVKNRKQARSKYGAKMEKK) are disordered.

It belongs to the universal ribosomal protein uS12 family. In terms of assembly, part of the 30S ribosomal subunit. Contacts proteins S8 and S17. May interact with IF1 in the 30S initiation complex.

In terms of biological role, with S4 and S5 plays an important role in translational accuracy. Its function is as follows. Interacts with and stabilizes bases of the 16S rRNA that are involved in tRNA selection in the A site and with the mRNA backbone. Located at the interface of the 30S and 50S subunits, it traverses the body of the 30S subunit contacting proteins on the other side and probably holding the rRNA structure together. The combined cluster of proteins S8, S12 and S17 appears to hold together the shoulder and platform of the 30S subunit. In Renibacterium salmoninarum (strain ATCC 33209 / DSM 20767 / JCM 11484 / NBRC 15589 / NCIMB 2235), this protein is Small ribosomal subunit protein uS12.